The chain runs to 81 residues: Apolipoprotein C-I, acidic form (81 aa).

An N-terminal signal peptide occupies residues 1–24; that stretch reads MRLFLSLLVVVLSIVLEGPTPAQG.

Belongs to the apolipoprotein C1 family.

Its subcellular location is the secreted. The sequence is that of Apolipoprotein C-I, acidic form (APOC1A) from Theropithecus gelada (Gelada baboon).